The following is a 267-amino-acid chain: Type II pantothenate kinase (267 aa).

6 to 13 contributes to the ATP binding site; it reads DAGGTLIK. Glu70 functions as the Proton acceptor in the catalytic mechanism. ATP contacts are provided by residues Thr99, 121–125, Tyr137, and Ser225; that span reads GGMIQ.

This sequence belongs to the type II pantothenate kinase family. Homodimer.

It localises to the cytoplasm. It catalyses the reaction (R)-pantothenate + ATP = (R)-4'-phosphopantothenate + ADP + H(+). It functions in the pathway cofactor biosynthesis; coenzyme A biosynthesis; CoA from (R)-pantothenate: step 1/5. Functionally, catalyzes the phosphorylation of pantothenate (Pan), the first step in CoA biosynthesis. This is Type II pantothenate kinase from Staphylococcus aureus (strain USA300).